The primary structure comprises 143 residues: uncharacterized protein (143 aa).

The protein to E.coli YifN.

This is an uncharacterized protein from Haemophilus influenzae (strain ATCC 51907 / DSM 11121 / KW20 / Rd).